Reading from the N-terminus, the 132-residue chain is Vesicle transport protein GOT1A (132 aa).

Topologically, residues 1 to 16 are cytoplasmic; that stretch reads MISITEWQKIGVGTTG. Residues 17–37 traverse the membrane as a helical segment; the sequence is FGIFFILFGMLLYFDSVLLAF. The Lumenal segment spans residues 38–39; it reads GN. Residues 40-60 form a helical membrane-spanning segment; that stretch reads LLFLTGLSLIIGLRRTFSFFF. Residues 61-68 are Cytoplasmic-facing; the sequence is QRHKFKGT. A helical membrane pass occupies residues 69 to 89; it reads SFFLGGVVIVLLRWPLLGMCL. The Lumenal portion of the chain corresponds to 90–100; it reads ETYGFFSLFRG. A helical membrane pass occupies residues 101 to 121; it reads FFPVAFGFLGSASNIPFLSAL. The Cytoplasmic segment spans residues 122–132; it reads FQRLQGTSSMV.

It belongs to the GOT1 family.

The protein localises to the golgi apparatus membrane. Its function is as follows. May be involved in fusion of ER-derived transport vesicles with the Golgi complex. This chain is Vesicle transport protein GOT1A, found in Bos taurus (Bovine).